A 216-amino-acid polypeptide reads, in one-letter code: Ras-like protein rasW (216 aa).

GTP is bound at residue 16 to 23; it reads GDGGVGKT. Positions 38–46 match the Effector region motif; the sequence is YDPTIEDSY. GTP-binding positions include 63 to 67 and 122 to 125; these read DTAGQ and NKID. Residues 171-193 are disordered; the sequence is KRKEDPQSHKPSKDSDSKKPLVN. The segment covering 172–189 has biased composition (basic and acidic residues); sequence RKEDPQSHKPSKDSDSKK. Cys213 is subject to Cysteine methyl ester. The S-geranylgeranyl cysteine moiety is linked to residue Cys213. Positions 214–216 are cleaved as a propeptide — removed in mature form; that stretch reads KMM.

This sequence belongs to the small GTPase superfamily. Ras family.

Its subcellular location is the cell membrane. It catalyses the reaction GTP + H2O = GDP + phosphate + H(+). Functionally, ras proteins bind GDP/GTP and possess intrinsic GTPase activity. In Dictyostelium discoideum (Social amoeba), this protein is Ras-like protein rasW (rasW).